Reading from the N-terminus, the 340-residue chain is MGKTIPRFLEQLDLIKSFVGLATGAGALYLLYKAVRTGLKCHPPLCSNSPICIARLAIERERHGRDSGEIRRLLNSLDCKQDEYTRSMILHNITRCVYLLEAEASSCTMDDIDLVADMLDEKDNSVKIQALNALKAFSGIRKFRLKIQEHCIKVLELISTIWDLELHVAGLRLLNNLPLPDYVHPQLRRVMPALMEIIQSDCILAQVQAVRLLSYLAQKNDLLYDILNCQVRPNFLNLFQSSQPGSLLFEVLVFAEHLSEGRNATHYRAVKWHYNEQSLHEALFGDESRLADRLLSLVIHPEEEVQIQACKVIVSLQCPQDLGSRPSSCRPSHSCFKTGK.

The interaction with TBC1D15 stretch occupies residues 1-101; that stretch reads MGKTIPRFLE…NITRCVYLLE (101 aa). 3 ARM repeats span residues 100 to 139, 179 to 218, and 278 to 318; these read LEAE…AFSG, LPDY…YLAQ, and SLHE…SLQC. Residues 321–340 form a disordered region; that stretch reads DLGSRPSSCRPSHSCFKTGK. Residues 324 to 340 show a composition bias toward low complexity; sequence SRPSSCRPSHSCFKTGK.

Interacts with TBC1D15, TBC1D21, GK2 and IMMT. Interacts with VDAC2 and VDAC3 in a TBC1D21-dependent manner. Interacts (via ARM domains) with RBBP4. Testis-specific.

It localises to the nucleus. It is found in the mitochondrion outer membrane. Functionally, essential for male fertility and sperm mitochondrial sheath formation. Required for proper mitochondrial elongation and coiling along the flagellum during the formation of the mitochondrial sheath. Facilitates the growth and aggressiveness of neuroblastoma cells. Increases the EZH2 activity and H3K27me3 levels in a RBBP4-dependent manner, and facilitates the enrichment of polycomb repressive complex 2 and H3K27me3 on gene promoters, resulting in transcriptional repression of tumor suppressors affecting the proliferation, invasion, and metastasis of tumor cells. The sequence is that of Armadillo repeat-containing protein 12 (Armc12) from Mus musculus (Mouse).